Reading from the N-terminus, the 106-residue chain is Guanyl-specific ribonuclease Th1 (106 aa).

Cystine bridges form between Cys5–Cys103 and Cys23–Cys84. His39 is an active-site residue. Glu58 functions as the Proton acceptor in the catalytic mechanism. His92 (proton donor) is an active-site residue.

This sequence belongs to the ribonuclease N1/T1 family.

It carries out the reaction [RNA] containing guanosine + H2O = an [RNA fragment]-3'-guanosine-3'-phosphate + a 5'-hydroxy-ribonucleotide-3'-[RNA fragment].. In Trichoderma harzianum (Hypocrea lixii), this protein is Guanyl-specific ribonuclease Th1.